Reading from the N-terminus, the 938-residue chain is Protein SEY1 (938 aa).

The disordered stretch occupies residues 1–159; sequence MTSQSHGAPP…QKSAKSTPGS (159 aa). Residues 1 to 839 lie on the Cytoplasmic side of the membrane; the sequence is MTSQSHGAPP…KRSTIQSTTQ (839 aa). Positions 33 to 45 are enriched in low complexity; it reads SVSSSHSSHSPVT. Residues 74-94 show a composition bias toward pro residues; the sequence is IAAPEPIAAPEPIPAPEPIAA. Positions 100–118 are enriched in basic and acidic residues; that stretch reads LKSEHKPVEREHKPVERKP. The span at 146–158 shows a compositional bias: polar residues; that stretch reads VPTSQKSAKSTPG. One can recognise a GB1/RHD3-type G domain in the interval 192 to 423; the sequence is GLDYHVVAVF…DPNYVFKPVY (232 aa). GTP is bound at residue 202-209; it reads GSQSTGKS. A coiled-coil region spans residues 603–630; it reads SYDDTLAALEQELDTLRDHKSKVEIDRL. Residues 840–860 traverse the membrane as a helical segment; that stretch reads IPLYMYGLLLLLGWNEIMAVL. Topologically, residues 861–863 are lumenal; that stretch reads RSP. A helical transmembrane segment spans residues 864 to 884; it reads VYFMFLLVAAGAAYVIHTLHL. Residues 885–938 are Cytoplasmic-facing; sequence WGPLTHMTNTMIAEATDMAKAKLKQVLNEAPTGETREREAPVGSSRDDVELKDL. The interval 911-938 is disordered; it reads LNEAPTGETREREAPVGSSRDDVELKDL. Basic and acidic residues predominate over residues 918–938; the sequence is ETREREAPVGSSRDDVELKDL.

This sequence belongs to the TRAFAC class dynamin-like GTPase superfamily. GB1/RHD3 GTPase family. RHD3 subfamily.

It localises to the endoplasmic reticulum membrane. In terms of biological role, cooperates with the reticulon proteins and tubule-shaping DP1 family proteins to generate and maintain the structure of the tubular endoplasmic reticulum network. Has GTPase activity, which is required for its function in ER organization. In Yarrowia lipolytica (strain CLIB 122 / E 150) (Yeast), this protein is Protein SEY1.